Here is a 393-residue protein sequence, read N- to C-terminus: Protein TsgA (393 aa).

Topologically, residues 1–10 (MTNSNRIKLT) are cytoplasmic. Residues 11–31 (WISFLSYALTGALVIVTGMVM) form a helical membrane-spanning segment. Over 32 to 50 (GNIADYFHLPVSSMSNTFT) the chain is Periplasmic. A helical membrane pass occupies residues 51–71 (FLNAGILISIFLNAWLMEIVP). The Cytoplasmic portion of the chain corresponds to 72–77 (LKTQLR). A helical membrane pass occupies residues 78–98 (FGFILMVLAVAGLMFSHSLAL). Residues 99 to 100 (FS) are Periplasmic-facing. Residues 101–121 (AAMFVLGLVSGITMSIGTFLI) form a helical membrane-spanning segment. Topologically, residues 122–133 (TQLYEGRQRGSR) are cytoplasmic. The helical transmembrane segment at 134–154 (LLFTDSFFSMAGMIFPMVAAF) threads the bilayer. At 155–161 (LLARSIE) the chain is on the periplasmic side. Residues 162-182 (WYWVYACIGLVYLAIFILTFG) traverse the membrane as a helical segment. Over 183–205 (CEFPALGKHAQHSQAPVVKEKWG) the chain is Cytoplasmic. Residues 206 to 226 (IGVLFLAVAALCYILGQLGFI) form a helical membrane-spanning segment. Over 227–244 (SWVPEYAKGLGMSLNDAG) the chain is Periplasmic. The chain crosses the membrane as a helical span at residues 245-265 (ALVSDFWMSYMFGMWAFSFIL). The Cytoplasmic portion of the chain corresponds to 266-272 (RFFDLQR). The helical transmembrane segment at 273–293 (ILTVLAGMAAVLMYLFITGTQ) threads the bilayer. Residues 294–297 (AHMP) lie on the Periplasmic side of the membrane. Residues 298–318 (WFILTLGFFSSAIYTSIITLG) traverse the membrane as a helical segment. Residues 319–331 (SQQTKVASPKLVN) are Cytoplasmic-facing. A helical membrane pass occupies residues 332–352 (FILTCGTIGTMLTFVVTGPIV). Residues 353 to 360 (AHSGPQAA) are Periplasmic-facing. Residues 361–381 (LLTANGLYAVVFVMCFALGFV) form a helical membrane-spanning segment. Residues 382–393 (SRHRQHSSPAAH) are Cytoplasmic-facing.

Belongs to the major facilitator superfamily. TsgA family.

The protein resides in the cell inner membrane. The protein is Protein TsgA of Salmonella paratyphi A (strain ATCC 9150 / SARB42).